Reading from the N-terminus, the 361-residue chain is tRNA/tmRNA (uracil-C(5))-methyltransferase (361 aa).

Gln185, Tyr213, Asn218, Glu234, and Asp294 together coordinate S-adenosyl-L-methionine. Catalysis depends on Cys319, which acts as the Nucleophile. Glu353 (proton acceptor) is an active-site residue.

It belongs to the class I-like SAM-binding methyltransferase superfamily. RNA M5U methyltransferase family. TrmA subfamily.

The enzyme catalyses uridine(54) in tRNA + S-adenosyl-L-methionine = 5-methyluridine(54) in tRNA + S-adenosyl-L-homocysteine + H(+). The catalysed reaction is uridine(341) in tmRNA + S-adenosyl-L-methionine = 5-methyluridine(341) in tmRNA + S-adenosyl-L-homocysteine + H(+). Dual-specificity methyltransferase that catalyzes the formation of 5-methyluridine at position 54 (m5U54) in all tRNAs, and that of position 341 (m5U341) in tmRNA (transfer-mRNA). The chain is tRNA/tmRNA (uracil-C(5))-methyltransferase from Pseudomonas putida (strain ATCC 700007 / DSM 6899 / JCM 31910 / BCRC 17059 / LMG 24140 / F1).